The chain runs to 256 residues: Methylesterase 9 (256 aa).

Residue Ser78 is the Acyl-ester intermediate of the active site. Active-site charge relay system residues include Asp206 and His234.

This sequence belongs to the AB hydrolase superfamily. Methylesterase family.

The enzyme catalyses methyl (indol-3-yl)acetate + H2O = (indol-3-yl)acetate + methanol + H(+). It catalyses the reaction methyl (-)-jasmonate + H2O = jasmonate + methanol + H(+). The catalysed reaction is methyl salicylate + H2O = salicylate + methanol + H(+). It participates in plant hormone biosynthesis. Its pathway is lipid metabolism; oxylipin biosynthesis. Its activity is regulated as follows. Esterase activity is down-regulated by salicylic acid (SA). Its function is as follows. Methylesterase shown to have carboxylesterase activity, methyl indole-3-acetic acid (MeIAA) esterase activity, methyl salicylate (MeSA) esterase activity and methyl jasmonate (MeJA) esterase activity in vitro. Required to convert methyl salicylate (MeSA) to salicylic acid (SA) as part of the signal transduction pathways that activate systemic acquired resistance in systemic tissue. MeSA is believed to be an inactive form that needs to be demethylated to exert a biological effect. This chain is Methylesterase 9, found in Arabidopsis thaliana (Mouse-ear cress).